Consider the following 336-residue polypeptide: Putative ALA-interacting subunit 4 (336 aa).

A helical transmembrane segment spans residues Val-36–Phe-56. Residue Asn-94 is glycosylated (N-linked (GlcNAc...) asparagine). Residues Arg-127–Lys-142 are compositionally biased toward basic and acidic residues. The tract at residues Arg-127–Asp-148 is disordered. The N-linked (GlcNAc...) asparagine glycan is linked to Asn-167. The helical transmembrane segment at Phe-290–Ser-310 threads the bilayer. Asn-329 is a glycosylation site (N-linked (GlcNAc...) asparagine).

Belongs to the CDC50/LEM3 family. As to expression, expressed in flowers. May be restricted to pollen grains.

It localises to the membrane. In Arabidopsis thaliana (Mouse-ear cress), this protein is Putative ALA-interacting subunit 4 (ALIS4).